The primary structure comprises 628 residues: Carbon monoxide dehydrogenase 1 (628 aa).

6 residues coordinate [4Fe-4S] cluster: cysteine 44, cysteine 52, cysteine 53, cysteine 56, cysteine 61, and cysteine 75. Residues histidine 266, cysteine 302, cysteine 340, cysteine 448, cysteine 478, and cysteine 519 each coordinate [Ni-4Fe-5S] cluster.

The protein belongs to the Ni-containing carbon monoxide dehydrogenase family. In terms of assembly, homodimer. Requires [4Fe-4S] cluster as cofactor. [Ni-4Fe-5S] cluster is required as a cofactor.

It carries out the reaction CO + 2 oxidized [2Fe-2S]-[ferredoxin] + H2O = 2 reduced [2Fe-2S]-[ferredoxin] + CO2 + 2 H(+). Its function is as follows. CODH oxidizes carbon monoxide coupled, via CooF, to the reduction of a hydrogen cation by a hydrogenase (possibly CooH). This is Carbon monoxide dehydrogenase 1 (cooS1) from Methanosarcina mazei (strain ATCC BAA-159 / DSM 3647 / Goe1 / Go1 / JCM 11833 / OCM 88) (Methanosarcina frisia).